A 233-amino-acid polypeptide reads, in one-letter code: Ribonuclease 3 (233 aa).

The region spanning 4–126 (LNKLMERLGH…IVGAIYIDAG (123 aa)) is the RNase III domain. Residue Glu-39 participates in Mg(2+) binding. The active site involves Asp-43. Mg(2+) is bound by residues Asp-112 and Glu-115. Glu-115 is a catalytic residue. In terms of domain architecture, DRBM spans 153–222 (DAKSLLQEWL…AKRFLELLDD (70 aa)).

This sequence belongs to the ribonuclease III family. In terms of assembly, homodimer. Mg(2+) serves as cofactor.

The protein resides in the cytoplasm. It carries out the reaction Endonucleolytic cleavage to 5'-phosphomonoester.. Functionally, digests double-stranded RNA. Involved in the processing of primary rRNA transcript to yield the immediate precursors to the large and small rRNAs (23S and 16S). Processes some mRNAs, and tRNAs when they are encoded in the rRNA operon. Processes pre-crRNA and tracrRNA of type II CRISPR loci if present in the organism. In Coxiella burnetii (strain CbuK_Q154) (Coxiella burnetii (strain Q154)), this protein is Ribonuclease 3.